A 315-amino-acid polypeptide reads, in one-letter code: MTFTQQVKKELSILPINVKTSKSELSAIFRLNGIYHLGTAVGNTLEVQTQNPASARRTYQLLSQTYEADIQTNIERGGSAKIFGLHRYGVITMKQADQILADIQLDPFSSDRRVPEVFLNSQAKQQAFLRAAFLSTGSVNAPNSKNYHLEISAADEDLIEQIFSIMNNRNFNLGAKIADRRNKLIVYLKTGERISDFLSIIQATSSMLHFEDARIMSDMRNSANRLANADNANVTRMAEAAERQYEAMDFLRQQNRLDNLPEKLKIVADLRLKNPEASLSDLAGMIEGQELTKSGINHRMRKLMQIVKELNHKKV.

Residues Ser278–His312 constitute a DNA-binding region (H-T-H motif).

The protein belongs to the WhiA family.

Functionally, involved in cell division and chromosome segregation. In Oenococcus oeni (strain ATCC BAA-331 / PSU-1), this protein is Probable cell division protein WhiA.